Reading from the N-terminus, the 424-residue chain is GTPase Obg (424 aa).

The Obg domain maps to 1 to 159 (MVFIDTARIY…MWVRLELKLL (159 aa)). The OBG-type G domain occupies 160 to 330 (ADVGLVGFPN…LLDKTIEILS (171 aa)). GTP is bound by residues 166–173 (GFPNAGKS), 191–195 (FTTLT), 212–215 (DIPG), 282–285 (NKMD), and 311–313 (SAL). Residues S173 and T193 each coordinate Mg(2+). One can recognise an OCT domain in the interval 347 to 424 (NPPEEEETLE…VRDFEFEYYE (78 aa)).

It belongs to the TRAFAC class OBG-HflX-like GTPase superfamily. OBG GTPase family. As to quaternary structure, monomer. Requires Mg(2+) as cofactor.

Its subcellular location is the cytoplasm. Functionally, an essential GTPase which binds GTP, GDP and possibly (p)ppGpp with moderate affinity, with high nucleotide exchange rates and a fairly low GTP hydrolysis rate. Plays a role in control of the cell cycle, stress response, ribosome biogenesis and in those bacteria that undergo differentiation, in morphogenesis control. The chain is GTPase Obg from Caldanaerobacter subterraneus subsp. tengcongensis (strain DSM 15242 / JCM 11007 / NBRC 100824 / MB4) (Thermoanaerobacter tengcongensis).